The sequence spans 548 residues: Glucose-6-phosphate isomerase (548 aa).

Glu-355 (proton donor) is an active-site residue. Active-site residues include His-386 and Lys-514.

Belongs to the GPI family.

It is found in the cytoplasm. The enzyme catalyses alpha-D-glucose 6-phosphate = beta-D-fructose 6-phosphate. It functions in the pathway carbohydrate biosynthesis; gluconeogenesis. Its pathway is carbohydrate degradation; glycolysis; D-glyceraldehyde 3-phosphate and glycerone phosphate from D-glucose: step 2/4. Catalyzes the reversible isomerization of glucose-6-phosphate to fructose-6-phosphate. The chain is Glucose-6-phosphate isomerase from Yersinia enterocolitica serotype O:8 / biotype 1B (strain NCTC 13174 / 8081).